A 240-amino-acid polypeptide reads, in one-letter code: Phosphoribosylaminoimidazole-succinocarboxamide synthase (240 aa).

Belongs to the SAICAR synthetase family.

It carries out the reaction 5-amino-1-(5-phospho-D-ribosyl)imidazole-4-carboxylate + L-aspartate + ATP = (2S)-2-[5-amino-1-(5-phospho-beta-D-ribosyl)imidazole-4-carboxamido]succinate + ADP + phosphate + 2 H(+). It participates in purine metabolism; IMP biosynthesis via de novo pathway; 5-amino-1-(5-phospho-D-ribosyl)imidazole-4-carboxamide from 5-amino-1-(5-phospho-D-ribosyl)imidazole-4-carboxylate: step 1/2. This chain is Phosphoribosylaminoimidazole-succinocarboxamide synthase, found in Anoxybacillus flavithermus (strain DSM 21510 / WK1).